A 155-amino-acid chain; its full sequence is Large ribosomal subunit protein uL13 (155 aa).

This sequence belongs to the universal ribosomal protein uL13 family. As to quaternary structure, part of the 50S ribosomal subunit.

In terms of biological role, this protein is one of the early assembly proteins of the 50S ribosomal subunit, although it is not seen to bind rRNA by itself. It is important during the early stages of 50S assembly. The chain is Large ribosomal subunit protein uL13 from Aeropyrum pernix (strain ATCC 700893 / DSM 11879 / JCM 9820 / NBRC 100138 / K1).